Reading from the N-terminus, the 555-residue chain is Formate--tetrahydrofolate ligase (555 aa).

64–71 is a binding site for ATP; the sequence is TKAGIGKT.

This sequence belongs to the formate--tetrahydrofolate ligase family.

It catalyses the reaction (6S)-5,6,7,8-tetrahydrofolate + formate + ATP = (6R)-10-formyltetrahydrofolate + ADP + phosphate. Its pathway is one-carbon metabolism; tetrahydrofolate interconversion. The polypeptide is Formate--tetrahydrofolate ligase (Phocaeicola vulgatus (strain ATCC 8482 / DSM 1447 / JCM 5826 / CCUG 4940 / NBRC 14291 / NCTC 11154) (Bacteroides vulgatus)).